The chain runs to 526 residues: MTQQLNHAKVNQHPGQATLPETAEGQVRTYEVKTYGCQMNVHDSERLSGLLEEAGYVAAPEDATPDLVVFNTCAVRENADMRLYGTLGNLRSVKEKNPGMQIAVGGCLAQKDKDTVVKKAPWVDVVFGTHNIGSLPTLLQRAEHNAQAEVEIVDSLEQFPSVLPAKRESAYAGWVSVSVGCNNTCTFCIVPSLRGKEQDRRPGDILAEVQALVDQGVTEVTLLGQNVNAYGVNFVDPELERDRSAFSKLLRACGEIEGLERVRFTSPHPAEFTSDVIDAMAETPNICPQLHMPLQSGSDKVLKEMRRSYRSKKFLSILDEVRAKIPHASITTDIIVGFPGETEEDFQATLDVVKKARFTSAYTFQYSPRPGTPAAEYENQLPKEVVQERYERLMVVQEQVCEEENQKLIGTTVELLVQAGGGRKNDATKRMSGRARDGRLVHFAPEGDIDGEIRPGDFVTVTVTEAKPFFLIADSGVQTHRRTKAGDNSAVGQVPTTAPIGVGLGLPQIGAPKVAPATESACCSIN.

The segment at 1–24 (MTQQLNHAKVNQHPGQATLPETAE) is disordered. The region spanning 28–144 (RTYEVKTYGC…LPTLLQRAEH (117 aa)) is the MTTase N-terminal domain. [4Fe-4S] cluster-binding residues include C37, C73, C107, C181, C185, and C188. Residues 167–403 (RESAYAGWVS…MVVQEQVCEE (237 aa)) form the Radical SAM core domain. The 72-residue stretch at 406-477 (QKLIGTTVEL…PFFLIADSGV (72 aa)) folds into the TRAM domain.

The protein belongs to the methylthiotransferase family. MiaB subfamily. In terms of assembly, monomer. The cofactor is [4Fe-4S] cluster.

The protein localises to the cytoplasm. The catalysed reaction is N(6)-dimethylallyladenosine(37) in tRNA + (sulfur carrier)-SH + AH2 + 2 S-adenosyl-L-methionine = 2-methylsulfanyl-N(6)-dimethylallyladenosine(37) in tRNA + (sulfur carrier)-H + 5'-deoxyadenosine + L-methionine + A + S-adenosyl-L-homocysteine + 2 H(+). Catalyzes the methylthiolation of N6-(dimethylallyl)adenosine (i(6)A), leading to the formation of 2-methylthio-N6-(dimethylallyl)adenosine (ms(2)i(6)A) at position 37 in tRNAs that read codons beginning with uridine. This chain is tRNA-2-methylthio-N(6)-dimethylallyladenosine synthase, found in Corynebacterium glutamicum (strain R).